A 259-amino-acid chain; its full sequence is Ribosomal RNA small subunit methyltransferase A (259 aa).

S-adenosyl-L-methionine contacts are provided by N12, L14, G39, E60, D84, and N102.

Belongs to the class I-like SAM-binding methyltransferase superfamily. rRNA adenine N(6)-methyltransferase family. RsmA subfamily.

The protein localises to the cytoplasm. It carries out the reaction adenosine(1518)/adenosine(1519) in 16S rRNA + 4 S-adenosyl-L-methionine = N(6)-dimethyladenosine(1518)/N(6)-dimethyladenosine(1519) in 16S rRNA + 4 S-adenosyl-L-homocysteine + 4 H(+). Functionally, specifically dimethylates two adjacent adenosines (A1518 and A1519) in the loop of a conserved hairpin near the 3'-end of 16S rRNA in the 30S particle. May play a critical role in biogenesis of 30S subunits. This Nitrosospira multiformis (strain ATCC 25196 / NCIMB 11849 / C 71) protein is Ribosomal RNA small subunit methyltransferase A.